A 991-amino-acid chain; its full sequence is Replication protein 1a (991 aa).

Positions valine 52–glutamine 409 are methyltransferase. The Alphavirus-like MT domain occupies histidine 72 to methionine 290. The (+)RNA virus helicase ATP-binding domain maps to cysteine 686–alanine 837. An ATP-dependent helicase region spans residues valine 711 to tyrosine 973. Glycine 713–threonine 720 contacts ATP. In terms of domain architecture, (+)RNA virus helicase C-terminal spans aspartate 838–valine 991.

The protein belongs to the bromoviridae replication protein 1a family. Interacts with RNA-directed RNA polymerase 2a.

It localises to the host endoplasmic reticulum membrane. In terms of biological role, involved in the virus replication. Contains a helicase domain and a methyltransferase domain. The methyltransferase domain is probably involved in viral RNA capping. Involved in the formation of ER membrane spherular invaginations in which RNA replication complexes form. In Cucumber mosaic virus (strain Q) (CMV), this protein is Replication protein 1a.